Here is a 365-residue protein sequence, read N- to C-terminus: tRNA 2-selenouridine synthase (365 aa).

The region spanning 12-136 (FLDDVPMMDM…LRTFLLDTTQ (125 aa)) is the Rhodanese domain. Cys-95 (S-selanylcysteine intermediate) is an active-site residue.

This sequence belongs to the SelU family. In terms of assembly, monomer.

The enzyme catalyses 5-methylaminomethyl-2-thiouridine(34) in tRNA + selenophosphate + (2E)-geranyl diphosphate + H2O + H(+) = 5-methylaminomethyl-2-selenouridine(34) in tRNA + (2E)-thiogeraniol + phosphate + diphosphate. It catalyses the reaction 5-methylaminomethyl-2-thiouridine(34) in tRNA + (2E)-geranyl diphosphate = 5-methylaminomethyl-S-(2E)-geranyl-thiouridine(34) in tRNA + diphosphate. The catalysed reaction is 5-methylaminomethyl-S-(2E)-geranyl-thiouridine(34) in tRNA + selenophosphate + H(+) = 5-methylaminomethyl-2-(Se-phospho)selenouridine(34) in tRNA + (2E)-thiogeraniol. It carries out the reaction 5-methylaminomethyl-2-(Se-phospho)selenouridine(34) in tRNA + H2O = 5-methylaminomethyl-2-selenouridine(34) in tRNA + phosphate. Its function is as follows. Involved in the post-transcriptional modification of the uridine at the wobble position (U34) of tRNA(Lys), tRNA(Glu) and tRNA(Gln). Catalyzes the conversion of 2-thiouridine (S2U-RNA) to 2-selenouridine (Se2U-RNA). Acts in a two-step process involving geranylation of 2-thiouridine (S2U) to S-geranyl-2-thiouridine (geS2U) and subsequent selenation of the latter derivative to 2-selenouridine (Se2U) in the tRNA chain. This is tRNA 2-selenouridine synthase from Pseudomonas putida (strain W619).